The sequence spans 195 residues: Molybdenum cofactor guanylyltransferase (195 aa).

Residues 10 to 12 (LAG), K23, N51, D69, and D99 each bind GTP. Mg(2+) is bound at residue D99.

This sequence belongs to the MobA family. As to quaternary structure, monomer. The cofactor is Mg(2+).

The protein resides in the cytoplasm. It carries out the reaction Mo-molybdopterin + GTP + H(+) = Mo-molybdopterin guanine dinucleotide + diphosphate. Functionally, transfers a GMP moiety from GTP to Mo-molybdopterin (Mo-MPT) cofactor (Moco or molybdenum cofactor) to form Mo-molybdopterin guanine dinucleotide (Mo-MGD) cofactor. In Yersinia pestis bv. Antiqua (strain Antiqua), this protein is Molybdenum cofactor guanylyltransferase.